We begin with the raw amino-acid sequence, 328 residues long: Lipoyl synthase (328 aa).

[4Fe-4S] cluster is bound by residues C56, C61, C67, C82, C86, C89, and S293. The Radical SAM core domain occupies W68–S282.

Belongs to the radical SAM superfamily. Lipoyl synthase family. [4Fe-4S] cluster is required as a cofactor.

It is found in the cytoplasm. The enzyme catalyses [[Fe-S] cluster scaffold protein carrying a second [4Fe-4S](2+) cluster] + N(6)-octanoyl-L-lysyl-[protein] + 2 oxidized [2Fe-2S]-[ferredoxin] + 2 S-adenosyl-L-methionine + 4 H(+) = [[Fe-S] cluster scaffold protein] + N(6)-[(R)-dihydrolipoyl]-L-lysyl-[protein] + 4 Fe(3+) + 2 hydrogen sulfide + 2 5'-deoxyadenosine + 2 L-methionine + 2 reduced [2Fe-2S]-[ferredoxin]. It functions in the pathway protein modification; protein lipoylation via endogenous pathway; protein N(6)-(lipoyl)lysine from octanoyl-[acyl-carrier-protein]: step 2/2. Its function is as follows. Catalyzes the radical-mediated insertion of two sulfur atoms into the C-6 and C-8 positions of the octanoyl moiety bound to the lipoyl domains of lipoate-dependent enzymes, thereby converting the octanoylated domains into lipoylated derivatives. In Frankia alni (strain DSM 45986 / CECT 9034 / ACN14a), this protein is Lipoyl synthase.